The sequence spans 135 residues: Large ribosomal subunit protein uL16c (135 aa).

It belongs to the universal ribosomal protein uL16 family. In terms of assembly, part of the 50S ribosomal subunit.

The protein localises to the plastid. Its subcellular location is the chloroplast. This is Large ribosomal subunit protein uL16c from Acorus calamus var. americanus (American sweet flag).